Consider the following 327-residue polypeptide: Aspartate--ammonia ligase (327 aa).

The protein belongs to the class-II aminoacyl-tRNA synthetase family. AsnA subfamily.

Its subcellular location is the cytoplasm. The enzyme catalyses L-aspartate + NH4(+) + ATP = L-asparagine + AMP + diphosphate + H(+). Its pathway is amino-acid biosynthesis; L-asparagine biosynthesis; L-asparagine from L-aspartate (ammonia route): step 1/1. The sequence is that of Aspartate--ammonia ligase from Bacillus cereus (strain ATCC 10987 / NRS 248).